We begin with the raw amino-acid sequence, 1096 residues long: Protein transport protein SEC24 B (1096 aa).

The segment at 1-315 (MAAPVPPGAY…SAPGTPGSIY (315 aa)) is disordered. The segment covering 12–23 (PNNNQQNSGGPP) has biased composition (low complexity). Residues 27 to 45 (PGSQGNPNSLAANMQNLNI) show a composition bias toward polar residues. Residues 47–64 (RPPPPMPGSGPRPSPPFG) show a composition bias toward pro residues. Residues 65–78 (QSPQSFPQQQQQQP) are compositionally biased toward low complexity. Pro residues predominate over residues 79-92 (RPSPMARPGPPPPA). Residues 93–107 (AMARPGGPPQVSQPG) are compositionally biased toward low complexity. The span at 108-122 (GFPPVGRPVAPPSNQ) shows a compositional bias: pro residues. A compositionally biased stretch (low complexity) spans 140 to 149 (SFPQPGGFPA). Pro residues-rich tracts occupy residues 150 to 160 (SGPPGGVPSGP), 171 to 186 (SPPPMGPGMSMPPPSG), 246 to 258 (MAPPPPYGQPPNA), and 287 to 303 (GRPPMPGGFPYGAPPQQ). Zn(2+) is bound by residues Cys433, Cys436, Cys455, and Cys458. Positions 433–458 (CSRCKGYVNPFMKFIDQGRKFICNLC) are zinc finger-like.

Belongs to the SEC23/SEC24 family. SEC24 subfamily. In terms of assembly, component of the coat protein complex II (COPII), composed of at least five proteins: the Sec23/24 complex, the Sec13/31 complex and Sar1. In terms of tissue distribution, mainly expressed in pollen, roots, stems, petioles and hypocotyls, and, to a lower extent, in leaves and cotyledons.

It localises to the cytoplasmic vesicle. The protein localises to the COPII-coated vesicle membrane. It is found in the endoplasmic reticulum membrane. Its subcellular location is the golgi apparatus membrane. In terms of biological role, component of the coat protein complex II (COPII), that covers ER-derived vesicles involved in transport from the endoplasmic reticulum to the Golgi apparatus. COPII is composed of at least five proteins: the SEC23/24 complex, the SEC13/31 complex, and the protein SAR1. Acts in the cytoplasm to promote the transport of secretory, plasma membrane, and vacuolar proteins from the endoplasmic reticulum to the Golgi complex. This Arabidopsis thaliana (Mouse-ear cress) protein is Protein transport protein SEC24 B.